Consider the following 114-residue polypeptide: Protein ORF3 (114 aa).

Hydrophobic regions lie at residues W6–R24 and A33–L53. The interval V28 to P68 is interaction with host HPX. The interval V48 to P72 is interaction with the capsid protein. Phosphoserine; by host is present on S71. Residues P72–R114 form a homodimerization, and interaction with host AMBP/bikunin region. The interval S85–R114 is disordered. The interval R95–V104 is interaction with host SRC, HCK, FYN, PIK3R3 and GRB2. Positions P96 to P99 match the PTAP/PSAP motif motif.

It belongs to the hepevirus ORF3 protein family. Forms homooligomers. Interacts with host SRC, HCK, FYN, PIK3R3 and GRB2 (via SH3 domain); binding does not activate the kinases. Interacts with host AMBP/bikunin and AMBP/alpha-1-microglobulin peptides. Interacts with host HPX/hemopexin. Interacts (when phosphorylated) with capsid protein ORF2. Interacts with host TSG101; this interaction plays a role in viral release from the host cell. Interacts with host SIRPA; this interaction down-regulates the phosphorylation of host IRF3. Palmitoylated in the N-terminus.

Its subcellular location is the host endoplasmic reticulum membrane. The protein resides in the host cytoplasm. It localises to the host cytoskeleton. It is found in the virion. The protein localises to the host cell membrane. In terms of biological role, small multifunctional phosphoprotein involved in virion morphogenesis, egress and counteracting host innate immunity. Plays critical roles in the final steps of viral release by interacting with host TSG101, a member of the vacuolar protein-sorting pathway and using other cellular host proteins involved in vesicle formation pathway. Also acts as a viroporin and forms ion conductive pores allowing viral particle release. Impairs the generation of type I interferon by down-regulating host TLR3 and TLR7 as well as their downstream signaling pathways. Down-regulates the phosphorylation of host IRF3 via the interaction with host SIRP-alpha, thereby inhibiting IFN-I expression. Interacts with host microtubules. The protein is Protein ORF3 of Hepatitis E virus genotype 1 (isolate Human/India/Hyderabad) (HEV-1).